A 316-amino-acid polypeptide reads, in one-letter code: Ribosomal RNA small subunit methyltransferase H (316 aa).

S-adenosyl-L-methionine-binding positions include 32–34 (AGH), Asp52, Phe79, Asp106, and Gln113.

It belongs to the methyltransferase superfamily. RsmH family.

It is found in the cytoplasm. It catalyses the reaction cytidine(1402) in 16S rRNA + S-adenosyl-L-methionine = N(4)-methylcytidine(1402) in 16S rRNA + S-adenosyl-L-homocysteine + H(+). Its function is as follows. Specifically methylates the N4 position of cytidine in position 1402 (C1402) of 16S rRNA. The protein is Ribosomal RNA small subunit methyltransferase H of Paenibacillus sp. (strain JDR-2).